We begin with the raw amino-acid sequence, 700 residues long: MEALLEGIQNRGHSGGFLTSCEAELQELMKQIDIMVAHKKSEWEGQTHALETCLDIRDRELKALRSQLDMKHKEVGILHQQIEEHEKTKQEMAMEYKEELLKLQEELSRLKRSYEKLQKKQLREFRGNTKSFREDRSEIERLTGKIEEFRQKSLDWEKQRLIYQQQVSSLEAQRKALAEQSEIIQAQLANRKQKLESVELSSQSEIQHLNSKLERAKDTICANELEIERLNIRVNDLMGTNMTILQDHRQKEEKLRESEKLLEALQEEQKELKASLQSQETFILEAKMQEKLQTTLKAVGTQQSVERPLEDCQKERKYSSPGQGVLDNVLSQLDFSHSSEELLQAEVTRLEGSLESVSATCKQLSQELMEKYEELKRMEGHNNEYRTEIKKLKEQILQADQTYSSALEGMKMEISQLTRELHQRDITIASAKCSSSDMEKQLKAEMQKAEEKAVEHKEILSQLESLKLENHRLSETVMKLELGLHEAKEISLADLQENYIEALNKLVSENQQLQKDLMSTKSELEHATNMCKKKDGEIFNPAHSRAAGFKNAELKPIHGQHRHDGIKTEQYKTGHHSPRGQTLDSIDPVARGPSPLSSHISPGSSTVSLPSNFLFEAHSLPSVLDINDVNFSDSLSDCMNDQEEFVSSGSLPTSPLGSIATRFLEEEELRSHHILERLDAHIEELKRESEKTVRQFTALV.

N-acetylmethionine is present on Met1. Coiled coils occupy residues 73 to 283 (KEVG…ETFI) and 343 to 533 (LQAE…MCKK). Phosphoserine occurs at positions 278, 488, and 492. The tract at residues 570-603 (QYKTGHHSPRGQTLDSIDPVARGPSPLSSHISPG) is disordered. Residues 593–603 (PSPLSSHISPG) are compositionally biased toward low complexity.

It belongs to the CEP63 family. In terms of assembly, interacts with CEP152 and CDK1; these interactions recruit both ligands to centrosomes. Interacts with CDK2, CDK5RAP2, WDR62, CEP90, KIAA0753/moonraker and CCDC14. CEP63, CDK5RAP2, CEP152, WDR62 are proposed to form a stepwise assembled complex at the centrosome forming a ring near parental centrioles. Interacts with CCDC57; the interaction is required for their location to proximal end of centrioles. Interacts with FXR1; promoting its stabilization. In terms of processing, polyubiquitinated via 'Lys-48'-linked ubiquitin, leading to its degradation. Deubiquitinated by USP36, promoting its stabilization.

It is found in the cytoplasm. It localises to the cytoskeleton. The protein localises to the microtubule organizing center. The protein resides in the centrosome. Its subcellular location is the centriole. It is found in the centriolar satellite. Functionally, required for normal spindle assembly. Plays a key role in mother-centriole-dependent centriole duplication; the function also seems to involve CEP152, CDK5RAP2 and WDR62 through a stepwise assembled complex at the centrosome that recruits CDK2 required for centriole duplication. Reported to be required for centrosomal recruitment of CEP152; however, this function has been questioned. Also recruits CDK1 to centrosomes. Plays a role in DNA damage response. Following DNA damage, such as double-strand breaks (DSBs), is removed from centrosomes; this leads to the inactivation of spindle assembly and delay in mitotic progression. Promotes stabilization of FXR1 protein by inhibiting FXR1 ubiquitination. The sequence is that of Centrosomal protein of 63 kDa from Mus musculus (Mouse).